Here is a 129-residue protein sequence, read N- to C-terminus: Small ribosomal subunit protein uS11 (129 aa).

It belongs to the universal ribosomal protein uS11 family. Part of the 30S ribosomal subunit. Interacts with proteins S7 and S18. Binds to IF-3.

Its function is as follows. Located on the platform of the 30S subunit, it bridges several disparate RNA helices of the 16S rRNA. Forms part of the Shine-Dalgarno cleft in the 70S ribosome. This chain is Small ribosomal subunit protein uS11, found in Anoxybacillus flavithermus (strain DSM 21510 / WK1).